The chain runs to 421 residues: Phosphatidylinositol 5-phosphate 4-kinase type-2 gamma (421 aa).

At Ala-2 the chain carries N-acetylalanine. Ser-26 carries the post-translational modification Phosphoserine. A PIPK domain is found at 43 to 420; the sequence is AADPLVGVFL…RFLDFITNIF (378 aa). The segment at 69 to 75 is required for interaction with PIP5K1A; it reads VMLLPDD. A Phosphoserine modification is found at Ser-349.

As to quaternary structure, interacts with PIP5K1A; the interaction inhibits PIP5K1A kinase activity. Phosphorylated, phosphorylation is induced by EGF.

It is found in the endoplasmic reticulum. The protein localises to the cytoplasm. The catalysed reaction is a 1,2-diacyl-sn-glycero-3-phospho-(1D-myo-inositol-5-phosphate) + ATP = a 1,2-diacyl-sn-glycero-3-phospho-(1D-myo-inositol-4,5-bisphosphate) + ADP + H(+). The enzyme catalyses 1,2-dihexadecanoyl-sn-glycero-3-phospho-(1D-myo-inositol-5-phosphate) + ATP = 1,2-dihexadecanoyl-sn-glycero-3-phospho-(1D-myo-inositol-4,5-bisphosphate) + ADP + H(+). It catalyses the reaction 1,2-dihexadecanoyl-sn-glycero-3-phospho-(1D-myo-inositol-5-phosphate) + GTP = 1,2-dihexadecanoyl-sn-glycero-3-phospho-(1D-myo-inositol-4,5-bisphosphate) + GDP + H(+). Its function is as follows. Phosphatidylinositol 5-phosphate 4-kinase with low enzymatic activity. May be a GTP sensor, has higher GTP-dependent kinase activity than ATP-dependent kinase activity. PIP4Ks negatively regulate insulin signaling through a catalytic-independent mechanism. They interact with PIP5Ks and suppress PIP5K-mediated PtdIns(4,5)P2 synthesis and insulin-dependent conversion to PtdIns(3,4,5)P3. The sequence is that of Phosphatidylinositol 5-phosphate 4-kinase type-2 gamma (PIP4K2C) from Pongo abelii (Sumatran orangutan).